Reading from the N-terminus, the 355-residue chain is Anthranilate phosphoribosyltransferase (355 aa).

Residues Gly-91, 94–95 (GD), Thr-99, 101–104 (NIST), 119–127 (KHGNRAMSS), and Ala-131 each bind 5-phospho-alpha-D-ribose 1-diphosphate. Residue Gly-91 coordinates anthranilate. Ser-103 is a binding site for Mg(2+). Asn-122 is an anthranilate binding site. Arg-177 provides a ligand contact to anthranilate. Residues Asp-234 and Glu-235 each contribute to the Mg(2+) site.

It belongs to the anthranilate phosphoribosyltransferase family. Homodimer. Mg(2+) serves as cofactor.

It catalyses the reaction N-(5-phospho-beta-D-ribosyl)anthranilate + diphosphate = 5-phospho-alpha-D-ribose 1-diphosphate + anthranilate. It participates in amino-acid biosynthesis; L-tryptophan biosynthesis; L-tryptophan from chorismate: step 2/5. In terms of biological role, participates in the tryptophan-dependent indole-3-acetic acid production, which is a phytohormone released by A.brasilense. Catalyzes the transfer of the phosphoribosyl group of 5-phosphorylribose-1-pyrophosphate (PRPP) to anthranilate to yield N-(5'-phosphoribosyl)-anthranilate (PRA). In Azospirillum brasilense, this protein is Anthranilate phosphoribosyltransferase.